The sequence spans 228 residues: MIRHTRLLLASLCLIATGARASAEPVQDGQLWINTTLFGSVGDVAYFAEVQPRIGNGISQLDQIILRPAVGWKVNDALVLYQGYAYVEDHGMRDNVRIEDRSFQEINWKIGEFSGVKVSSRTRFEQRWQSAGRDVGFRLRENLRFAMPLPKDWGGVSAVGWTELFVALNDTDWGTRAGFDRVRAFIGLELPIGGKSTVEIGYLNQTARTQASGIELDHILSLNLFVRY.

Positions 1–23 are cleaved as a signal peptide; sequence MIRHTRLLLASLCLIATGARASA.

This is an uncharacterized protein from Methylorubrum extorquens (strain ATCC 14718 / DSM 1338 / JCM 2805 / NCIMB 9133 / AM1) (Methylobacterium extorquens).